We begin with the raw amino-acid sequence, 91 residues long: Antitoxin RelJ (91 aa).

Belongs to the phD/YefM antitoxin family. As to quaternary structure, homodimer.

Its function is as follows. Antitoxin component of a type II toxin-antitoxin (TA) system. A probable antitoxin for the putative mRNA interferase RelK. This Mycobacterium tuberculosis (strain CDC 1551 / Oshkosh) protein is Antitoxin RelJ (relJ).